A 294-amino-acid polypeptide reads, in one-letter code: Ribosomal RNA small subunit methyltransferase H (294 aa).

Residues 40 to 42, Asp59, Phe86, Asp102, and Gln109 each bind S-adenosyl-L-methionine; that span reads GGH.

Belongs to the methyltransferase superfamily. RsmH family.

The protein resides in the cytoplasm. The enzyme catalyses cytidine(1402) in 16S rRNA + S-adenosyl-L-methionine = N(4)-methylcytidine(1402) in 16S rRNA + S-adenosyl-L-homocysteine + H(+). Its function is as follows. Specifically methylates the N4 position of cytidine in position 1402 (C1402) of 16S rRNA. The chain is Ribosomal RNA small subunit methyltransferase H from Cyanothece sp. (strain PCC 7425 / ATCC 29141).